Here is a 482-residue protein sequence, read N- to C-terminus: Putative transposase R186 (482 aa).

Residues C416, C419, C433, and C435 each contribute to the Zn(2+) site.

The protein in the central section; belongs to the transposase 2 family. In the C-terminal section; belongs to the transposase 35 family.

This Acanthamoeba polyphaga (Amoeba) protein is Putative transposase R186.